We begin with the raw amino-acid sequence, 103 residues long: Large ribosomal subunit protein bL21 (103 aa).

This sequence belongs to the bacterial ribosomal protein bL21 family. In terms of assembly, part of the 50S ribosomal subunit. Contacts protein L20.

This protein binds to 23S rRNA in the presence of protein L20. The protein is Large ribosomal subunit protein bL21 of Salmonella agona (strain SL483).